Consider the following 483-residue polypeptide: Isocitrate dehydrogenase [NADP] (483 aa).

Position 74 (threonine 74) interacts with NADP(+). Positions 83, 85, 89, 99, and 121 each coordinate D-threo-isocitrate. Aspartate 232 serves as a coordination point for Mg(2+). Residues 264-270 and asparagine 277 each bind NADP(+); that span reads HGSAPDI.

Belongs to the isocitrate and isopropylmalate dehydrogenases family. Homodimer. The cofactor is Mg(2+). Mn(2+) serves as cofactor.

The catalysed reaction is D-threo-isocitrate + NADP(+) = 2-oxoglutarate + CO2 + NADPH. In terms of biological role, catalyzes the oxidative decarboxylation of isocitrate to 2-oxoglutarate and carbon dioxide with the concomitant reduction of NADP(+). This Rickettsia prowazekii (strain Madrid E) protein is Isocitrate dehydrogenase [NADP] (icd).